A 130-amino-acid polypeptide reads, in one-letter code: Small ribosomal subunit protein uS9 (130 aa).

It belongs to the universal ribosomal protein uS9 family.

In Bacillus licheniformis (strain ATCC 14580 / DSM 13 / JCM 2505 / CCUG 7422 / NBRC 12200 / NCIMB 9375 / NCTC 10341 / NRRL NRS-1264 / Gibson 46), this protein is Small ribosomal subunit protein uS9.